The chain runs to 248 residues: 1-(5-phosphoribosyl)-5-[(5-phosphoribosylamino)methylideneamino] imidazole-4-carboxamide isomerase (248 aa).

Catalysis depends on Asp-8, which acts as the Proton acceptor. The active-site Proton donor is the Asp-131.

This sequence belongs to the HisA/HisF family.

Its subcellular location is the cytoplasm. It carries out the reaction 1-(5-phospho-beta-D-ribosyl)-5-[(5-phospho-beta-D-ribosylamino)methylideneamino]imidazole-4-carboxamide = 5-[(5-phospho-1-deoxy-D-ribulos-1-ylimino)methylamino]-1-(5-phospho-beta-D-ribosyl)imidazole-4-carboxamide. It functions in the pathway amino-acid biosynthesis; L-histidine biosynthesis; L-histidine from 5-phospho-alpha-D-ribose 1-diphosphate: step 4/9. The chain is 1-(5-phosphoribosyl)-5-[(5-phosphoribosylamino)methylideneamino] imidazole-4-carboxamide isomerase from Paracidovorax citrulli (strain AAC00-1) (Acidovorax citrulli).